The sequence spans 871 residues: Protein arg-6, mitochondrial (871 aa).

The transit peptide at 1–44 (MYSACAVALRAGARRVVRRVPKSARALPRAAAARRQISTTAARS) directs the protein to the mitochondrion. An N-acetyltransferase domain is found at 336–488 (QASTSLSEFK…DFTENGRAML (153 aa)). The active site involves Cys-689.

It in the N-terminal section; belongs to the acetylglutamate kinase family. In the C-terminal section; belongs to the NAGSA dehydrogenase family. In terms of processing, the protein precursor is cleaved into the two biologically active enzymes, the kinase and the reductase.

Its subcellular location is the mitochondrion. The enzyme catalyses N-acetyl-L-glutamate 5-semialdehyde + phosphate + NADP(+) = N-acetyl-L-glutamyl 5-phosphate + NADPH + H(+). The catalysed reaction is N-acetyl-L-glutamate + ATP = N-acetyl-L-glutamyl 5-phosphate + ADP. It participates in amino-acid biosynthesis; L-arginine biosynthesis; N(2)-acetyl-L-ornithine from L-glutamate: step 2/4. The protein operates within amino-acid biosynthesis; L-arginine biosynthesis; N(2)-acetyl-L-ornithine from L-glutamate: step 3/4. This chain is Protein arg-6, mitochondrial (arg-6), found in Neurospora crassa (strain ATCC 24698 / 74-OR23-1A / CBS 708.71 / DSM 1257 / FGSC 987).